Consider the following 159-residue polypeptide: Putative 4-hydroxy-4-methyl-2-oxoglutarate aldolase (159 aa).

Substrate-binding positions include 74–77 (GDNL) and R96. D97 lines the a divalent metal cation pocket.

The protein belongs to the class II aldolase/RraA-like family. Homotrimer. A divalent metal cation is required as a cofactor.

It catalyses the reaction 4-hydroxy-4-methyl-2-oxoglutarate = 2 pyruvate. The enzyme catalyses oxaloacetate + H(+) = pyruvate + CO2. Its function is as follows. Catalyzes the aldol cleavage of 4-hydroxy-4-methyl-2-oxoglutarate (HMG) into 2 molecules of pyruvate. Also contains a secondary oxaloacetate (OAA) decarboxylase activity due to the common pyruvate enolate transition state formed following C-C bond cleavage in the retro-aldol and decarboxylation reactions. The protein is Putative 4-hydroxy-4-methyl-2-oxoglutarate aldolase of Bacillus anthracis.